The chain runs to 502 residues: Myocilin (502 aa).

An N-terminal signal peptide occupies residues Met1 to Ala31. The stretch at Ala82–Gln183 forms a coiled coil. The interval Ala166–Ser198 is disordered. A glycan (N-linked (GlcNAc...) asparagine) is linked at Asn229. Residues Gly242–Glu501 form the Olfactomedin-like domain. A disulfide bond links Cys243 and Cys431. Residues Asp378, Asn426, Ala427, Val475, and Asp476 each contribute to the Ca(2+) site.

Homodimer (via N-terminus). Can also form higher oligomers. Interacts with OLFM3, FN1, NRCAM, GLDN and NFASC. Interacts (via N-terminus) with MYL2. Interacts with SFRP1, FRZB, FZD7, FZD10, FZD1 and WIF1; regulates Wnt signaling. Interacts with SNTA1; regulates muscle hypertrophy. Interacts with ERBB2 and ERBB3; activates ERBB2-ERBB3 signaling pathway. Interacts with SNCG; affects its secretion and its aggregation. Post-translationally, palmitoylated. In terms of processing, undergoes a calcium-dependent proteolytic cleavage at Gln-225 by CAPN2 in the endoplasmic reticulum. The result is the production of two fragments, one of 35 kDa containing the C-terminal olfactomedin-like domain, and another of 20 kDa containing the N-terminal leucine zipper-like domain. Glycosylated. As to expression, highly expressed in skeletal muscle and retina. Also detected at lower levels in thyroid gland but not in other endocrine glands such as the adrenal or pituitary glands.

The protein resides in the secreted. Its subcellular location is the golgi apparatus. The protein localises to the cytoplasmic vesicle. It localises to the extracellular space. It is found in the extracellular matrix. The protein resides in the extracellular exosome. Its subcellular location is the mitochondrion. The protein localises to the mitochondrion intermembrane space. It localises to the mitochondrion inner membrane. It is found in the mitochondrion outer membrane. The protein resides in the rough endoplasmic reticulum. Its subcellular location is the cell projection. The protein localises to the cilium. It localises to the endoplasmic reticulum. Its function is as follows. Secreted glycoprotein regulating the activation of different signaling pathways in adjacent cells to control different processes including cell adhesion, cell-matrix adhesion, cytoskeleton organization and cell migration. Promotes substrate adhesion, spreading and formation of focal contacts. Negatively regulates cell-matrix adhesion and stress fiber assembly through Rho protein signal transduction. Modulates the organization of actin cytoskeleton by stimulating the formation of stress fibers through interactions with components of Wnt signaling pathways. Promotes cell migration through activation of PTK2 and the downstream phosphatidylinositol 3-kinase signaling. Plays a role in bone formation and promotes osteoblast differentiation in a dose-dependent manner through mitogen-activated protein kinase signaling. Mediates myelination in the peripheral nervous system through ERBB2/ERBB3 signaling. Plays a role as a regulator of muscle hypertrophy through the components of dystrophin-associated protein complex. Involved in positive regulation of mitochondrial depolarization. Plays a role in neurite outgrowth. May participate in the obstruction of fluid outflow in the trabecular meshwork. This chain is Myocilin (Myoc), found in Rattus norvegicus (Rat).